Consider the following 151-residue polypeptide: MAVQLFFTEEQRKVFKSSFKSIDADGDGKITPEELKAAFKSIEIELTQEKIDEMMSMVDKDGSRPVDFSEILMKKAEQMRGKGAQYFKAFDALDTDKSGSLSPEELRTALSACTDPPMTKEEIDAIIKKADGNNDGEIRRAEFVRMIQSSY.

EF-hand domains are found at residues 10-45 (EQRK…IEIE), 46-78 (LTQE…KAEQ), 81-116 (GKGA…CTDP), and 118-151 (MTKE…QSSY). Residues Asp-23, Asp-25, Asp-27, Lys-29, Glu-34, Asp-59, Asp-61, Ser-63, Glu-70, Asp-94, Asp-96, Ser-98, Ser-100, Glu-105, Asp-131, Asp-135, Glu-137, and Glu-142 each coordinate Ca(2+).

As to expression, found in cell lineages giving rise to the aboral ectoderm, a squamous epithelium covering the surface of the late stage embryo and larva.

Its function is as follows. Calcium-binding protein involved in larval development and metamorphosis. Likely to function as calcium buffers mediating the transport of calcium from the sea water to the blastocoel where calcium is required for skeleton formation. In Strongylocentrotus purpuratus (Purple sea urchin), this protein is Calcium-binding protein SPEC 2C (SPEC2C).